We begin with the raw amino-acid sequence, 315 residues long: Mycothiol acetyltransferase (315 aa).

2 N-acetyltransferase domains span residues 4–141 (LDWR…RPLR) and 152–315 (VVIR…GTDN). Glu-36 lines the 1D-myo-inositol 2-(L-cysteinylamino)-2-deoxy-alpha-D-glucopyranoside pocket. Residues 80–82 (LVV) and 88–93 (RRGIGT) each bind acetyl-CoA. The 1D-myo-inositol 2-(L-cysteinylamino)-2-deoxy-alpha-D-glucopyranoside site is built by Glu-179, Lys-224, and Glu-234. Residues 238–240 (LGV) and 245–251 (QRRGLGQ) contribute to the acetyl-CoA site. Tyr-282 provides a ligand contact to 1D-myo-inositol 2-(L-cysteinylamino)-2-deoxy-alpha-D-glucopyranoside. An acetyl-CoA-binding site is contributed by 287-292 (NVAAVR).

The protein belongs to the acetyltransferase family. MshD subfamily. As to quaternary structure, monomer.

It catalyses the reaction 1D-myo-inositol 2-(L-cysteinylamino)-2-deoxy-alpha-D-glucopyranoside + acetyl-CoA = mycothiol + CoA + H(+). Catalyzes the transfer of acetyl from acetyl-CoA to desacetylmycothiol (Cys-GlcN-Ins) to form mycothiol. The sequence is that of Mycothiol acetyltransferase from Mycobacterium bovis (strain ATCC BAA-935 / AF2122/97).